The chain runs to 541 residues: uncharacterized protein (541 aa).

Residues 1–55 (MTKTVTRAGGASGPQQFQSGGETMKYEITRRRFLAASSAVLAAPAIVTMVRPARA) constitute a signal peptide (tat-type signal). Residues 339–362 (RRSPSGISSPRSNRQPKAEALSAR) form a disordered region. The span at 341–351 (SPSGISSPRSN) shows a compositional bias: low complexity. Helical transmembrane passes span 379–399 (AIVWFARQVVIFSGIALMVFM), 420–440 (LPVLIFPWFILGGIVLAAHSG), 466–486 (LVSAGAFLMLGYQAYLVGEIA), and 500–520 (VGYFALAVGSVLVAIVTLAVA).

Belongs to the bacterial solute-binding protein 7 family. In terms of processing, predicted to be exported by the Tat system. The position of the signal peptide cleavage has not been experimentally proven.

The protein resides in the cell membrane. This is an uncharacterized protein from Sinorhizobium fredii (strain NBRC 101917 / NGR234).